The following is a 315-amino-acid chain: GTP cyclohydrolase MptA (315 aa).

Belongs to the GTP cyclohydrolase IV family. As to quaternary structure, homodimer. Fe(2+) is required as a cofactor.

It catalyses the reaction GTP + H2O = 7,8-dihydroneopterin 2',3'-cyclic phosphate + formate + diphosphate + H(+). Its pathway is cofactor biosynthesis; 5,6,7,8-tetrahydromethanopterin biosynthesis. In terms of biological role, converts GTP to 7,8-dihydro-D-neopterin 2',3'-cyclic phosphate, the first intermediate in the biosynthesis of coenzyme methanopterin. The sequence is that of GTP cyclohydrolase MptA from Methanococcus maripaludis (strain C5 / ATCC BAA-1333).